The sequence spans 143 residues: MFLGTYTPKLDDKGRLTLPAKFRDALAGGLMVTKSQDHSLAVYPRAEFEKLARRASQASRSNPEARAFLRNLAAATDEQHPDAQGRITLSADHRRYASLSKECVVIGSVDYLEIWDAAAWQEYQQAHEENFSAATDETLRDII.

SpoVT-AbrB domains follow at residues 5 to 47 (TYTP…PRAE) and 76 to 119 (TDEQ…DAAA).

The protein belongs to the MraZ family. In terms of assembly, forms oligomers.

The protein localises to the cytoplasm. It is found in the nucleoid. The sequence is that of Transcriptional regulator MraZ from Mycobacterium sp. (strain JLS).